Here is a 180-residue protein sequence, read N- to C-terminus: Endoribonuclease YbeY (180 aa).

Residues His149, His153, and His159 each contribute to the Zn(2+) site.

Belongs to the endoribonuclease YbeY family. Zn(2+) is required as a cofactor.

It localises to the cytoplasm. Its function is as follows. Single strand-specific metallo-endoribonuclease involved in late-stage 70S ribosome quality control and in maturation of the 3' terminus of the 16S rRNA. In Prochlorococcus marinus (strain MIT 9515), this protein is Endoribonuclease YbeY.